The primary structure comprises 23 residues: Protein male-specific 40 (23 aa).

During early embryogenesis expression is initially detected at the early cleavage stages in the nucleus of two discrete cells. Subsequently, expression is abundant in the cytoplasm of the newly formed pole cells. Male-specific expression during the third larval instar.

It localises to the cytoplasm. Its subcellular location is the nucleus. In Drosophila melanogaster (Fruit fly), this protein is Protein male-specific 40.